The following is a 245-amino-acid chain: 5-oxoprolinase subunit A (245 aa).

Belongs to the LamB/PxpA family. As to quaternary structure, forms a complex composed of PxpA, PxpB and PxpC.

It catalyses the reaction 5-oxo-L-proline + ATP + 2 H2O = L-glutamate + ADP + phosphate + H(+). Functionally, catalyzes the cleavage of 5-oxoproline to form L-glutamate coupled to the hydrolysis of ATP to ADP and inorganic phosphate. The chain is 5-oxoprolinase subunit A from Neisseria meningitidis serogroup C (strain 053442).